Consider the following 99-residue polypeptide: DNA-binding protein Fis (99 aa).

A DNA-binding region (H-T-H motif) is located at residues 75–94; sequence QTRAANMLGINRGTLRKKLK.

This sequence belongs to the transcriptional regulatory Fis family. As to quaternary structure, homodimer.

Activates ribosomal RNA transcription. Plays a direct role in upstream activation of rRNA promoters. The polypeptide is DNA-binding protein Fis (Haemophilus influenzae (strain 86-028NP)).